The sequence spans 440 residues: uncharacterized protein (440 aa).

10 helical membrane passes run 1-21 (MLLV…QLYR), 29-49 (TVFI…SAFE), 70-90 (LLQM…IARI), 101-121 (VGVL…GIAM), 179-199 (TSII…LSLG), 226-246 (FVIR…AATS), 258-278 (IVAS…LLFF), 343-363 (IYPA…PFSF), 366-386 (ILTL…VGGG), and 389-409 (FAAI…GLLI).

This sequence belongs to the dicarboxylate/amino acid:cation symporter (DAACS) (TC 2.A.23) family.

Its subcellular location is the cell membrane. This is an uncharacterized protein from Haemophilus influenzae (strain ATCC 51907 / DSM 11121 / KW20 / Rd).